Here is a 330-residue protein sequence, read N- to C-terminus: uncharacterized protein (330 aa).

Belongs to the ornithine cyclodeaminase/mu-crystallin family.

The protein resides in the cytoplasm. This is an uncharacterized protein from Schizosaccharomyces pombe (strain 972 / ATCC 24843) (Fission yeast).